Reading from the N-terminus, the 179-residue chain is Hypoxanthine phosphoribosyltransferase (179 aa).

The diphosphate site is built by Arg45 and Gly46. Glu101 is a binding site for GMP. Glu101 lines the IMP pocket. The Mg(2+) site is built by Glu101 and Asp102. Asp105 (proton acceptor) is an active-site residue. Residues 105–110 (DTGYTL), Lys133, and Asp161 each bind GMP. Residues 105 to 110 (DTGYTL) and Lys133 each bind IMP. Arg167 serves as a coordination point for diphosphate.

This sequence belongs to the purine/pyrimidine phosphoribosyltransferase family. Homotetramer. The cofactor is Mg(2+).

Its subcellular location is the cytoplasm. The enzyme catalyses IMP + diphosphate = hypoxanthine + 5-phospho-alpha-D-ribose 1-diphosphate. The catalysed reaction is GMP + diphosphate = guanine + 5-phospho-alpha-D-ribose 1-diphosphate. Its pathway is purine metabolism; IMP biosynthesis via salvage pathway; IMP from hypoxanthine: step 1/1. Its function is as follows. Purine salvage pathway enzyme which catalyzes the transfer of the ribosyl-5-phosphate group from 5-phospho-alpha-D-ribose 1-diphosphate (PRPP) to the N9 position of hypoxanthine to yield IMP (inosine 5'-monophosphate). To a lesser extent, can also act on guanine leading to GMP, but shows a highly less efficient activity with xanthine. In Haemophilus influenzae (strain ATCC 51907 / DSM 11121 / KW20 / Rd), this protein is Hypoxanthine phosphoribosyltransferase (hpt).